The following is a 484-amino-acid chain: UDP-N-acetylmuramoyl-L-alanyl-D-glutamate--2,6-diaminopimelate ligase (484 aa).

Position 30 (S30) interacts with UDP-N-acetyl-alpha-D-muramoyl-L-alanyl-D-glutamate. 109–115 serves as a coordination point for ATP; sequence GTNGKTS. Residues 151 to 152, S178, and R186 contribute to the UDP-N-acetyl-alpha-D-muramoyl-L-alanyl-D-glutamate site; that span reads TT. K218 is modified (N6-carboxylysine). Meso-2,6-diaminopimelate-binding positions include R379, 403–406, G455, and E459; that span reads DNPR. Positions 403-406 match the Meso-diaminopimelate recognition motif motif; it reads DNPR.

It belongs to the MurCDEF family. MurE subfamily. Mg(2+) serves as cofactor. Carboxylation is probably crucial for Mg(2+) binding and, consequently, for the gamma-phosphate positioning of ATP.

It localises to the cytoplasm. The catalysed reaction is UDP-N-acetyl-alpha-D-muramoyl-L-alanyl-D-glutamate + meso-2,6-diaminopimelate + ATP = UDP-N-acetyl-alpha-D-muramoyl-L-alanyl-gamma-D-glutamyl-meso-2,6-diaminopimelate + ADP + phosphate + H(+). Its pathway is cell wall biogenesis; peptidoglycan biosynthesis. In terms of biological role, catalyzes the addition of meso-diaminopimelic acid to the nucleotide precursor UDP-N-acetylmuramoyl-L-alanyl-D-glutamate (UMAG) in the biosynthesis of bacterial cell-wall peptidoglycan. This is UDP-N-acetylmuramoyl-L-alanyl-D-glutamate--2,6-diaminopimelate ligase from Clostridioides difficile (strain 630) (Peptoclostridium difficile).